A 218-amino-acid chain; its full sequence is MANSSPVYDWFNERLEIQDIVDDISSKYVPPHVNIFYCLGGITLVCFLIQFATGFAMTFYYKPTVVEAYSSVQYLMTDVSFGWLIRSVHRWSASMMVLMLILHVFRVYLTGGFKRPRELTWVTGVTMAVITVSFGVTGYSLPWDQVGYWAVKIVSGVPAAVPVVGDFMVELLRGGESVGQSTLTRFYSLHTFVLPWLLAVFMLAHFLMIRKQGISGPL.

Residues 35–55 (IFYCLGGITLVCFLIQFATGF) traverse the membrane as a helical segment. A heme c-binding site is contributed by cysteine 38. 2 residues coordinate heme b: histidine 89 and histidine 103. Transmembrane regions (helical) follow at residues 93–113 (ASMM…TGGF), 119–139 (LTWV…VTGY), and 189–209 (LHTF…FLMI). Heme b is bound by residues histidine 190 and histidine 205.

This sequence belongs to the cytochrome b family. PetB subfamily. The 4 large subunits of the cytochrome b6-f complex are cytochrome b6, subunit IV (17 kDa polypeptide, PetD), cytochrome f and the Rieske protein, while the 4 small subunits are PetG, PetL, PetM and PetN. The complex functions as a dimer. It depends on heme b as a cofactor. The cofactor is heme c.

It localises to the cellular thylakoid membrane. Its function is as follows. Component of the cytochrome b6-f complex, which mediates electron transfer between photosystem II (PSII) and photosystem I (PSI), cyclic electron flow around PSI, and state transitions. The protein is Cytochrome b6 of Synechococcus sp. (strain RCC307).